A 607-amino-acid polypeptide reads, in one-letter code: tRNA uridine 5-carboxymethylaminomethyl modification enzyme MnmG (607 aa).

FAD is bound by residues 11–16 (GGGHAG), Val123, and Ser178. 270 to 284 (GPRYCPSVEDKIVRF) serves as a coordination point for NAD(+). Gln367 provides a ligand contact to FAD.

This sequence belongs to the MnmG family. Homodimer. Heterotetramer of two MnmE and two MnmG subunits. The cofactor is FAD.

Its subcellular location is the cytoplasm. Its function is as follows. NAD-binding protein involved in the addition of a carboxymethylaminomethyl (cmnm) group at the wobble position (U34) of certain tRNAs, forming tRNA-cmnm(5)s(2)U34. The protein is tRNA uridine 5-carboxymethylaminomethyl modification enzyme MnmG of Metamycoplasma arthritidis (strain 158L3-1) (Mycoplasma arthritidis).